Reading from the N-terminus, the 275-residue chain is MTRKIAIYGKGGIGKSTTTQNTAAALAFFHEKNVFIHGCDPKADSTRLILGGLPQQTVMDTLRIEGAERVTVDKVVKTGFKDIRCVESGGPEPGVGCAGRGVITAIDLMEENEAYSEDLDFLFFDVLGDVVCGGFAMPIRDGKAEEVYIVASGEMMAIYAANNICKGLAKYARQSGVRLGGIICNSRNVDGEKEFLEEFTKAIGTKMIHFVPRDNIVQKAEFNKQTVTEFQPEANQAQEYRELGRKIIENEDFVIPKPLAMDELEAMVVKYGLMD.

9–16 is a binding site for ATP; that stretch reads GKGGIGKS. Cys-97 is a [4Fe-4S] cluster binding site. Arg-100 bears the ADP-ribosylarginine; by dinitrogenase reductase ADP-ribosyltransferase mark. Cys-132 contacts [4Fe-4S] cluster.

It belongs to the NifH/BchL/ChlL family. As to quaternary structure, homodimer. Requires [4Fe-4S] cluster as cofactor. Post-translationally, the reversible ADP-ribosylation of Arg-100 inactivates the nitrogenase reductase and regulates nitrogenase activity.

It catalyses the reaction N2 + 8 reduced [2Fe-2S]-[ferredoxin] + 16 ATP + 16 H2O = H2 + 8 oxidized [2Fe-2S]-[ferredoxin] + 2 NH4(+) + 16 ADP + 16 phosphate + 6 H(+). The key enzymatic reactions in nitrogen fixation are catalyzed by the nitrogenase complex, which has 2 components: the iron protein (component 2) and a component 1 which is either a molybdenum-iron protein, a vanadium-iron, or an iron-iron protein. The polypeptide is Nitrogenase iron protein 2 (anfH) (Rhodobacter capsulatus (Rhodopseudomonas capsulata)).